The chain runs to 137 residues: ATP synthase epsilon chain (137 aa).

It belongs to the ATPase epsilon chain family. As to quaternary structure, F-type ATPases have 2 components, CF(1) - the catalytic core - and CF(0) - the membrane proton channel. CF(1) has five subunits: alpha(3), beta(3), gamma(1), delta(1), epsilon(1). CF(0) has three main subunits: a, b and c.

It localises to the cell membrane. In terms of biological role, produces ATP from ADP in the presence of a proton gradient across the membrane. In Syntrophomonas wolfei subsp. wolfei (strain DSM 2245B / Goettingen), this protein is ATP synthase epsilon chain.